The following is a 397-amino-acid chain: Lysophospholipid transporter LplT (397 aa).

The next 11 membrane-spanning stretches (helical) occupy residues 16-36 (MLAV…LLFA), 53-73 (VLQM…GQFA), 91-111 (LGAG…LVGI), 139-159 (LMES…GILA), 164-184 (LAAL…NLWI), 227-247 (LFWG…PVAL), 253-273 (AMPT…AGAA), 281-301 (TVSR…AFAV), 305-325 (LLPA…FIVP), 352-372 (NVAM…GVPP), and 373-393 (VAVG…LWVW).

Belongs to the major facilitator superfamily. LplT (TC 2.A.1.42) family.

The protein resides in the cell inner membrane. Its function is as follows. Catalyzes the facilitated diffusion of 2-acyl-glycero-3-phosphoethanolamine (2-acyl-GPE) into the cell. The protein is Lysophospholipid transporter LplT of Klebsiella pneumoniae subsp. pneumoniae (strain ATCC 700721 / MGH 78578).